We begin with the raw amino-acid sequence, 64 residues long: Phi-buthitoxin-Hj1a (64 aa).

The first 18 residues, 1–18 (MNSFVVVLLLFIAILCNA), serve as a signal peptide directing secretion. 3 disulfide bridges follow: cysteine 29/cysteine 43, cysteine 36/cysteine 49, and cysteine 42/cysteine 58.

It belongs to the scorpion calcin-like family. As to expression, expressed by the venom gland.

It localises to the secreted. Functionally, may increase intracellular calcium release through the activation of nuclear inositol 1,4,5-trisphosphate receptors (ITPR) of cardiomyocytes, thereby causing an increase in the contraction frequency of these cells. The sequence is that of Phi-buthitoxin-Hj1a from Hottentotta judaicus (Black scorpion).